We begin with the raw amino-acid sequence, 38 residues long: U-theraphotoxin-Aju1a (38 aa).

3 disulfides stabilise this stretch: cysteine 3–cysteine 24, cysteine 7–cysteine 30, and cysteine 16–cysteine 35.

Expressed by the venom gland.

The protein resides in the secreted. Has strong antifungal activity against C.albicans MDM8, C.krusei IOC 4559 (MIC=2.5-5 uM), C.glabrata IOC 45658 (MIC=2.5-5 uM), C.albicans IOC 45588 (MIC=2.5-5 uM), C.parapsilosis IOC 456416 (MIC=2.5-5 uM), C.tropicalis IOC 45608 (MIC=2.5-5 uM), C.guilliermondii IOC 455716 (MIC=2.5-5 uM) and A.niger (MIC=5-10 uM). Lacks antifungal activity against B.bassiana. Has no antibacterial effect against Gram-positive bacteria M.luteus, S.epidermidis, S.aureus or against Gram-negative bacteria E.coli and P.aeruginosa. Has no hemolytic activity against human erythrocytes. Probable ion channel inhibitor. This chain is U-theraphotoxin-Aju1a, found in Avicularia juruensis (Yellow-banded pinktoe).